The primary structure comprises 240 residues: MKDLQKKSSVRRQITNEDDERYGEDSIHDLPRTIPNVNPYIRNSGFRPSYSSQIPSTRSLFNNYYNRSSANTVGNDTIDTDSVSYNGVAKFRRNSVDIPLQTHNRLEVRPIIDRQDYLWREIDALDDVKRQAQATELYDQFPPGFENKLMQLRQAHSKLLQVLRDRNAKIEEEQRREVAVATAAAMMTRTPSPTGKSVGDEATSNNMHSSSAIRNPNGPTVDPEEGKYIQELVNTIRELQ.

Residues 1–27 (MKDLQKKSSVRRQITNEDDERYGEDSI) form a disordered region. 2 positions are modified to phosphoserine: Ser59 and Ser95. Positions 189 to 227 (RTPSPTGKSVGDEATSNNMHSSSAIRNPNGPTVDPEEGK) are disordered. Residues 202–218 (ATSNNMHSSSAIRNPNG) are compositionally biased toward polar residues.

This is an uncharacterized protein from Saccharomyces cerevisiae (strain ATCC 204508 / S288c) (Baker's yeast).